We begin with the raw amino-acid sequence, 487 residues long: UPF0324 membrane protein NE0724 (487 aa).

The next 11 helical transmembrane spans lie at 19–38 (WAVWLGLIMFMASVSSLWGW), 71–93 (PALSLLVTYLVFTALTCLAAWSM), 100–119 (FFIGWTILFIMTWVIWIIGN), 139–161 (LSLGSGFSYLLALLVGLVIGNFF), 181–200 (AIVFLGIKIGVMSIEAAGFI), 204–226 (VMTGVAATFVAYMLFWPIVYALG), 269–291 (VSILVVIFAMFELIILPGFYTAI), 350–369 (IWIDMFIGVWAFVLALVWVY), 389–411 (FPKFVLGYLLVWFSYIMLASSGS), 426–443 (GPMRNMMFMLTFISIGII), and 456–478 (ALLYAIALFGIIAPIAYGVAWIF).

This sequence belongs to the UPF0324 family.

Its subcellular location is the cell membrane. This is UPF0324 membrane protein NE0724 from Nitrosomonas europaea (strain ATCC 19718 / CIP 103999 / KCTC 2705 / NBRC 14298).